Here is a 324-residue protein sequence, read N- to C-terminus: Viral cathepsin (324 aa).

The signal sequence occupies residues 1 to 16 (MNKIVLYLLVYGATLG). Residues 17-113 (AAYDLLKAPS…VVLDRPPDKG (97 aa)) constitute a propeptide, activation peptide. 3 cysteine pairs are disulfide-bonded: C134/C175, C168/C208, and C263/C311. C137 is an active-site residue. An N-linked (GlcNAc...) asparagine; by host glycan is attached at N159. Residues H270 and N290 contribute to the active site.

Belongs to the peptidase C1 family. Synthesized as an inactive proenzyme and activated by proteolytic removal of the inhibitory propeptide.

It carries out the reaction Endopeptidase of broad specificity, hydrolyzing substrates of both cathepsin L and cathepsin B.. Functionally, cysteine protease that plays an essential role in host liquefaction to facilitate horizontal transmission of the virus. May participate in the degradation of foreign protein expressed by the baculovirus system. The polypeptide is Viral cathepsin (VCATH) (Antheraea pernyi nuclear polyhedrosis virus (ApNPV)).